The sequence spans 459 residues: ATP synthase subunit beta (459 aa).

148-155 (GGAGVGKT) contacts ATP.

Belongs to the ATPase alpha/beta chains family. In terms of assembly, F-type ATPases have 2 components, CF(1) - the catalytic core - and CF(0) - the membrane proton channel. CF(1) has five subunits: alpha(3), beta(3), gamma(1), delta(1), epsilon(1). CF(0) has three main subunits: a(1), b(2) and c(9-12). The alpha and beta chains form an alternating ring which encloses part of the gamma chain. CF(1) is attached to CF(0) by a central stalk formed by the gamma and epsilon chains, while a peripheral stalk is formed by the delta and b chains.

The protein resides in the cell inner membrane. It catalyses the reaction ATP + H2O + 4 H(+)(in) = ADP + phosphate + 5 H(+)(out). Produces ATP from ADP in the presence of a proton gradient across the membrane. The catalytic sites are hosted primarily by the beta subunits. The sequence is that of ATP synthase subunit beta from Thiobacillus denitrificans (strain ATCC 25259 / T1).